Reading from the N-terminus, the 401-residue chain is Argininosuccinate synthase (401 aa).

ATP-binding positions include 7–15 (AYSGGLDTS) and alanine 34. Positions 85 and 90 each coordinate L-citrulline. Position 115 (glycine 115) interacts with ATP. Threonine 117, asparagine 121, and aspartate 122 together coordinate L-aspartate. L-citrulline is bound at residue asparagine 121. The L-citrulline site is built by arginine 125, serine 174, serine 183, glutamate 259, and tyrosine 271.

The protein belongs to the argininosuccinate synthase family. Type 1 subfamily. In terms of assembly, homotetramer.

The protein resides in the cytoplasm. It carries out the reaction L-citrulline + L-aspartate + ATP = 2-(N(omega)-L-arginino)succinate + AMP + diphosphate + H(+). It participates in amino-acid biosynthesis; L-arginine biosynthesis; L-arginine from L-ornithine and carbamoyl phosphate: step 2/3. The chain is Argininosuccinate synthase from Desulforamulus reducens (strain ATCC BAA-1160 / DSM 100696 / MI-1) (Desulfotomaculum reducens).